We begin with the raw amino-acid sequence, 196 residues long: Transmembrane protein 52 (196 aa).

A signal peptide spans 1–28; it reads MAPGPSATQGILLLLPLLPLSQVTLGSA. The helical transmembrane segment at 47–67 threads the bilayer; it reads LWHVGLILLAILLMLLCGVTA. The tract at residues 162-196 is disordered; sequence EEVAAPSEKTNSLPEALEPETTGGPQEPGPSAQRP.

The protein localises to the membrane. The protein is Transmembrane protein 52 (Tmem52) of Mus musculus (Mouse).